The chain runs to 311 residues: Malate dehydrogenase (311 aa).

Residues 7–13 (GAAGGIG) and Asp-34 each bind NAD(+). Substrate is bound by residues Arg-81 and Arg-87. NAD(+) contacts are provided by residues Asn-94 and 117-119 (ITN). Residues Asn-119 and Arg-153 each coordinate substrate. His-177 acts as the Proton acceptor in catalysis. Met-227 lines the NAD(+) pocket.

The protein belongs to the LDH/MDH superfamily. MDH type 1 family. Homodimer.

It catalyses the reaction (S)-malate + NAD(+) = oxaloacetate + NADH + H(+). Its function is as follows. Catalyzes the reversible oxidation of malate to oxaloacetate. This chain is Malate dehydrogenase, found in Shewanella halifaxensis (strain HAW-EB4).